The following is a 234-amino-acid chain: CD-NTase-associated protein 13 (234 aa).

Residues 20–42 (TIMKNVIANVSTAITLALMILWI) form a helical membrane-spanning segment.

The protein in the C-terminal section; belongs to the bacterial STING family.

Its subcellular location is the cell inner membrane. Functionally, effector protein of a CBASS antivirus system. CBASS (cyclic oligonucleotide-based antiphage signaling system) provides immunity against bacteriophage. The CD-NTase protein synthesizes cyclic nucleotides in response to infection; these serve as specific second messenger signals. The signals activate a diverse range of effectors, leading to bacterial cell death and thus abortive phage infection. A type I-D CBASS(GG) system. In terms of biological role, binds c-di-GMP (synthesized by the cognate CdnE encoded upstream in the same operon) and about 10-fold less well 3'3'-cGAMP, but not c-di-AMP, 2'3'-cGAMP or cUMP-AMP (tested with a protein without the transmembrane region). The effector protein for this CBASS system, its activity is stimulated by c-di-GMP and leads to cell death. In Roseivirga ehrenbergii (strain DSM 102268 / JCM 13514 / KCTC 12282 / NCIMB 14502 / KMM 6017), this protein is CD-NTase-associated protein 13.